The sequence spans 407 residues: Negative RAS protein regulator protein (407 aa).

Disordered stretches follow at residues 51–94 (PRII…ARQI), 165–187 (HPSK…NLNF), and 241–273 (NNNN…NVFS). Residues 55–73 (SSSNSNSNSNSNSNSNSNS) are compositionally biased toward low complexity. The Myb-like domain maps to 90–158 (SARQIRKKWK…QCHDRFKVLY (69 aa)). Residues 165 to 177 (HPSKKSKQKKKKS) are compositionally biased toward basic residues. Residues 241–270 (NNNNNNINNSNNSNNNNSNNINRNSNHSTN) show a composition bias toward low complexity.

It is found in the nucleus. Its function is as follows. Negative regulator of the Ras-cyclic AMP pathway. Negatively regulate the activity of normal but not mutationally activated Ras proteins. The down-regulatory effect of RPI1 requires the presence of one of the two Ras GTPase activators, IRA1 and IRA2. The chain is Negative RAS protein regulator protein (RPI1) from Saccharomyces cerevisiae (strain ATCC 204508 / S288c) (Baker's yeast).